A 554-amino-acid chain; its full sequence is Urocanate hydratase (554 aa).

NAD(+) is bound by residues glycine 50–glycine 51, glutamine 128, glycine 174–glycine 176, glutamate 194, arginine 199, asparagine 240–alanine 241, glutamine 261–histidine 265, tyrosine 271–isoleucine 272, and tyrosine 320. Cysteine 408 is an active-site residue. Glycine 490 lines the NAD(+) pocket.

The protein belongs to the urocanase family. It depends on NAD(+) as a cofactor.

The protein resides in the cytoplasm. It catalyses the reaction 4-imidazolone-5-propanoate = trans-urocanate + H2O. It participates in amino-acid degradation; L-histidine degradation into L-glutamate; N-formimidoyl-L-glutamate from L-histidine: step 2/3. Its function is as follows. Catalyzes the conversion of urocanate to 4-imidazolone-5-propionate. The sequence is that of Urocanate hydratase from Rubrobacter xylanophilus (strain DSM 9941 / JCM 11954 / NBRC 16129 / PRD-1).